The sequence spans 788 residues: 5-methyltetrahydropteroyltriglutamate--homocysteine methyltransferase (788 aa).

Residues 24-27 (RELK) and Lys140 contribute to the 5-methyltetrahydropteroyltri-L-glutamate site. Residues 463–465 (IGS) and Glu516 contribute to the L-homocysteine site. Residues 463–465 (IGS) and Glu516 contribute to the L-methionine site. 5-methyltetrahydropteroyltri-L-glutamate is bound by residues 547-548 (RC) and Trp593. Asp631 contacts L-homocysteine. Position 631 (Asp631) interacts with L-methionine. A 5-methyltetrahydropteroyltri-L-glutamate-binding site is contributed by Glu637. The Zn(2+) site is built by His673, Cys675, and Glu697. His726 acts as the Proton donor in catalysis. Residue Cys758 participates in Zn(2+) binding.

This sequence belongs to the vitamin-B12 independent methionine synthase family. Zn(2+) serves as cofactor.

It carries out the reaction 5-methyltetrahydropteroyltri-L-glutamate + L-homocysteine = tetrahydropteroyltri-L-glutamate + L-methionine. It functions in the pathway amino-acid biosynthesis; L-methionine biosynthesis via de novo pathway; L-methionine from L-homocysteine (MetE route): step 1/1. Its function is as follows. Catalyzes the transfer of a methyl group from 5-methyltetrahydrofolate to homocysteine resulting in methionine formation. The chain is 5-methyltetrahydropteroyltriglutamate--homocysteine methyltransferase from Rhodopseudomonas palustris (strain ATCC BAA-98 / CGA009).